Here is a 465-residue protein sequence, read N- to C-terminus: Antithrombin-III (465 aa).

A signal peptide spans 1 to 32 (MYSPGAGSGAAGERKLCLLSLLLIGALGCAIC). Intrachain disulfides connect Cys-41–Cys-161 and Cys-54–Cys-128. Thr-64 is subject to Phosphothreonine. A Phosphoserine modification is found at Ser-69. Position 82 (Trp-82) interacts with heparin. The N-linked (GlcNAc...) asparagine glycan is linked to Asn-129. Heparin is bound at residue Arg-162. Asn-168 carries an N-linked (GlcNAc...) asparagine glycan. Residue Arg-178 participates in heparin binding. N-linked (GlcNAc...) asparagine glycosylation is found at Asn-188 and Asn-225. Cys-280 and Cys-463 form a disulfide bridge.

Belongs to the serpin family. As to quaternary structure, forms protease inhibiting heterodimer with TMPRSS7. Phosphorylated by FAM20C in the extracellular medium. In terms of tissue distribution, plasma.

It localises to the secreted. The protein resides in the extracellular space. Its function is as follows. Most important serine protease inhibitor in plasma that regulates the blood coagulation cascade. AT-III inhibits thrombin, matriptase-3/TMPRSS7, as well as factors IXa, Xa and XIa. Its inhibitory activity is greatly enhanced in the presence of heparin. The protein is Antithrombin-III (Serpinc1) of Mus musculus (Mouse).